The sequence spans 440 residues: uncharacterized protein (440 aa).

This is an uncharacterized protein from Rickettsia prowazekii (strain Madrid E).